The following is a 196-amino-acid chain: Nodulation protein A (196 aa).

The protein belongs to the NodA family.

It is found in the cytoplasm. In terms of biological role, N-acyltransferase required for nodulation. Acts in the production of a small, heat-stable compound (Nod) that stimulates mitosis in various plant protoplasts. The polypeptide is Nodulation protein A (Sinorhizobium terangae).